The following is a 289-amino-acid chain: Transcriptional regulator Rob (289 aa).

The HTH araC/xylS-type domain maps to 8–106 (RDLLIWLEGH…SQTPALYRRS (99 aa)). DNA-binding regions (H-T-H motif) lie at residues 25–46 (DNVA…KDVT) and 73–96 (ILDI…KKQF).

Transcriptional regulator. Represses transcription of genes belonging to the flagellar regulon, including flhD, flhB and fliC; probably thereby leading to repression of motility. Binds to regulatory regions of target genes, including the promoters of the flhDC operon and of P-type ATPase mgtA. Involved in post-transcriptional regulation of expression. Represses expression of the flhDC operon in a post-transcriptional manner. Binds to the right arm of the replication origin oriC of the chromosome. Rob binding may influence the formation of the nucleoprotein structure, required for oriC function in the initiation of replication. In Salmonella typhimurium (strain LT2 / SGSC1412 / ATCC 700720), this protein is Transcriptional regulator Rob.